Reading from the N-terminus, the 313-residue chain is Ribosomal RNA small subunit methyltransferase H (313 aa).

Residues 36–38 (GGH), D56, F80, D102, and Q109 each bind S-adenosyl-L-methionine.

The protein belongs to the methyltransferase superfamily. RsmH family.

Its subcellular location is the cytoplasm. It catalyses the reaction cytidine(1402) in 16S rRNA + S-adenosyl-L-methionine = N(4)-methylcytidine(1402) in 16S rRNA + S-adenosyl-L-homocysteine + H(+). Its function is as follows. Specifically methylates the N4 position of cytidine in position 1402 (C1402) of 16S rRNA. The chain is Ribosomal RNA small subunit methyltransferase H from Actinobacillus pleuropneumoniae serotype 3 (strain JL03).